Here is a 158-residue protein sequence, read N- to C-terminus: Cytochrome c-type biogenesis protein CcmE (158 aa).

Over 1-7 (MKPRHRR) the chain is Cytoplasmic. The chain crosses the membrane as a helical; Signal-anchor for type II membrane protein span at residues 8 to 28 (LTLIALVLGGLGLSAGLALTA). Topologically, residues 29-158 (FQDNLVFFFT…DGHPETTTAY (130 aa)) are periplasmic. Residues His-123 and Tyr-127 each coordinate heme. Residues 138–158 (RIGQGNGTPGPDGHPETTTAY) form a disordered region.

This sequence belongs to the CcmE/CycJ family.

It is found in the cell inner membrane. Functionally, heme chaperone required for the biogenesis of c-type cytochromes. Transiently binds heme delivered by CcmC and transfers the heme to apo-cytochromes in a process facilitated by CcmF and CcmH. This is Cytochrome c-type biogenesis protein CcmE from Alkalilimnicola ehrlichii (strain ATCC BAA-1101 / DSM 17681 / MLHE-1).